We begin with the raw amino-acid sequence, 172 residues long: Xanthine-guanine phosphoribosyltransferase (172 aa).

5-phospho-alpha-D-ribose 1-diphosphate-binding positions include 47 to 48 (RG) and 106 to 114 (DDLVDTGKT). Asp-107 provides a ligand contact to Mg(2+). Positions 110 and 153 each coordinate guanine. Residues Asp-110 and Ile-153 each coordinate xanthine. GMP is bound by residues 110–114 (DTGKT) and 152–153 (WI).

Belongs to the purine/pyrimidine phosphoribosyltransferase family. XGPT subfamily. Homotetramer. It depends on Mg(2+) as a cofactor.

The protein localises to the cell inner membrane. It catalyses the reaction GMP + diphosphate = guanine + 5-phospho-alpha-D-ribose 1-diphosphate. The catalysed reaction is XMP + diphosphate = xanthine + 5-phospho-alpha-D-ribose 1-diphosphate. It carries out the reaction IMP + diphosphate = hypoxanthine + 5-phospho-alpha-D-ribose 1-diphosphate. It functions in the pathway purine metabolism; GMP biosynthesis via salvage pathway; GMP from guanine: step 1/1. Its pathway is purine metabolism; XMP biosynthesis via salvage pathway; XMP from xanthine: step 1/1. Purine salvage pathway enzyme that catalyzes the transfer of the ribosyl-5-phosphate group from 5-phospho-alpha-D-ribose 1-diphosphate (PRPP) to the N9 position of the 6-oxopurines guanine and xanthine to form the corresponding ribonucleotides GMP (guanosine 5'-monophosphate) and XMP (xanthosine 5'-monophosphate), with the release of PPi. To a lesser extent, also acts on hypoxanthine. This chain is Xanthine-guanine phosphoribosyltransferase, found in Rhodopseudomonas palustris (strain BisB5).